Reading from the N-terminus, the 665-residue chain is MAGAAVLRRSARRIYRHLAAAPAFSRSVLQQPKRLLSSQSSPEHGARGAVSGSELALYPPERVRNFSIIAHVDHGKSTLADRLLELTGTIQKGHGQPQYLDKLQVERERGITVKAQTATMFYRHVSASQDSDTPKYLLNLIDTPGHVDFSYEVSRSLAACQGALLVVDAAQGVQAQTIANFYLAFESNLSIIPVINKIDQPTADPDNVKDQLKRLFDIDPSEALLTSAKTGQGLEQVLPAVIERIPSPPGKCDAPVRMLLLDSYYDEYKGVICHVAIVDGALRKGDKIASAATGRAYEVLDVGIMHPELKPTGVLYTGQVGYVISGMRSTKEARIGDTLHQAKSTVEPLPGFKPAKHMVFSGLYPADGSDFEALSHAIEKLTCNDASVSITKETSNALGMGFRCGFLGLLHMDVFHQRLEQEYGAQVISTIPTVPYIFEYGDGSKVQVENPAALASNPGKRVAACWEPTVIATIIIPSEYVGPVIMLCSERRGEQLEYTFIDAQRALLKYQLPLKEIIVDFYNELKGITSGYATFDYEDSEYQQSDLVKMDILLNGQPVDAMATIVHNQKAQRVGKELVEKLKKFIERQMFEITIQAAIGSKVIARETLSAMRKNVLAKCYGGDITRKKKLLEKQKEGKKRMKRVGSVDIPQEAFHELLKVSNSK.

The transit peptide at 1-35 (MAGAAVLRRSARRIYRHLAAAPAFSRSVLQQPKRL) directs the protein to the mitochondrion. The tract at residues 34–53 (RLLSSQSSPEHGARGAVSGS) is disordered. The tr-type G domain maps to 61–249 (ERVRNFSIIA…AVIERIPSPP (189 aa)). Residues 70–77 (AHVDHGKS), 142–146 (DTPGH), and 196–199 (NKID) each bind GTP.

It belongs to the TRAFAC class translation factor GTPase superfamily. Classic translation factor GTPase family. LepA subfamily.

It localises to the mitochondrion inner membrane. It catalyses the reaction GTP + H2O = GDP + phosphate + H(+). In terms of biological role, promotes mitochondrial protein synthesis. May act as a fidelity factor of the translation reaction, by catalyzing a one-codon backward translocation of tRNAs on improperly translocated ribosomes. Binds to mitochondrial ribosomes in a GTP-dependent manner. The polypeptide is Translation factor GUF1 homolog, mitochondrial (Sorghum bicolor (Sorghum)).